We begin with the raw amino-acid sequence, 776 residues long: Protein translocase subunit SecA 2 (776 aa).

ATP is bound by residues Gln-80, 98-102 (GEGKT), and Asp-486.

The protein belongs to the SecA family. Monomer and homodimer. Part of the essential Sec protein translocation apparatus which comprises SecA, SecYEG and auxiliary proteins SecDF. Other proteins may also be involved.

The protein resides in the cell membrane. It is found in the cytoplasm. It catalyses the reaction ATP + H2O + cellular proteinSide 1 = ADP + phosphate + cellular proteinSide 2.. Functionally, part of the Sec protein translocase complex. Interacts with the SecYEG preprotein conducting channel. Has a central role in coupling the hydrolysis of ATP to the transfer of proteins into and across the cell membrane, serving as an ATP-driven molecular motor driving the stepwise translocation of polypeptide chains across the membrane. This is Protein translocase subunit SecA 2 from Listeria monocytogenes serotype 1/2a (strain 10403S).